The following is a 65-amino-acid chain: Sodium channel alpha-toxin Acra4 (65 aa).

The 62-residue stretch at 2 to 63 (RDGYIVDDKN…PIKDPSYKCH (62 aa)) folds into the LCN-type CS-alpha/beta domain. 4 disulfides stabilise this stretch: Cys12–Cys62, Cys16–Cys34, Cys20–Cys44, and Cys24–Cys46. Position 65 (Arg65) is a propeptide, removed by a carboxypeptidase.

The protein belongs to the long (4 C-C) scorpion toxin superfamily. Sodium channel inhibitor family. Alpha subfamily. In terms of tissue distribution, expressed by the venom gland.

The protein resides in the secreted. In terms of biological role, alpha toxins bind voltage-independently at site-3 of sodium channels (Nav) and inhibit the inactivation of the activated channels, thereby blocking neuronal transmission. Electrophysiological studies of this were performed using sodium-channels expressed in F11 cell culture, by patch-clamp recordings. Affinity of this toxin toward sodium channels in F11 cell line is in the order of 1 uM concentration. The protein is Sodium channel alpha-toxin Acra4 of Androctonus crassicauda (Arabian fat-tailed scorpion).